The sequence spans 333 residues: Adenosine deaminase (333 aa).

Zn(2+) is bound by residues His-12 and His-14. The substrate site is built by His-14, Asp-16, and Gly-170. Position 197 (His-197) interacts with Zn(2+). Residue Glu-200 is the Proton donor of the active site. Zn(2+) is bound at residue Asp-278. Substrate is bound at residue Asp-279.

This sequence belongs to the metallo-dependent hydrolases superfamily. Adenosine and AMP deaminases family. Adenosine deaminase subfamily. Requires Zn(2+) as cofactor.

It catalyses the reaction adenosine + H2O + H(+) = inosine + NH4(+). The catalysed reaction is 2'-deoxyadenosine + H2O + H(+) = 2'-deoxyinosine + NH4(+). Its function is as follows. Catalyzes the hydrolytic deamination of adenosine and 2-deoxyadenosine. This is Adenosine deaminase from Edwardsiella ictaluri (strain 93-146).